Here is a 69-residue protein sequence, read N- to C-terminus: uncharacterized protein (69 aa).

Positions 1–16 (MKKIMLFLAMTSILSA) are cleaved as a signal peptide. C17 is lipidated: N-palmitoyl cysteine. A lipid anchor (S-diacylglycerol cysteine) is attached at C17.

The protein localises to the cell membrane. This is an uncharacterized protein from Bacillus subtilis (strain 168).